We begin with the raw amino-acid sequence, 1416 residues long: Telomere-associated protein RIF1 (1416 aa).

Disordered stretches follow at residues 789–858, 886–984, 1021–1054, and 1166–1186; these read PIRK…PVVQ, PEVA…HLTG, ARAQ…QAPP, and TART…APEE. A compositionally biased stretch (low complexity) spans 928 to 945; sequence GSSGDPAASAGAVAAGEM. Residues 1029-1050 are compositionally biased toward polar residues; that stretch reads QVSTPTSELNELTGTDHTSTPI.

Belongs to the RIF1 family. Highly divergent. As to quaternary structure, interacts with Pp1-87b. Interacts with SuUR (via SNF2-like region). Phosphorylated, probably by Cdk1; phosphorylation regulates dissociation from heterochromatin. In terms of tissue distribution, expressed in nurse cells and follicle cells in the adult female (at protein level). Detected in adult at extremely low levels.

The protein resides in the nucleus. It is found in the chromosome. It localises to the telomere. In terms of biological role, regulates the timing of initiation of DNA replication. Functions in copy number control by promoting the underreplication of DNA, which is found in many late replicating euchromatic regions of salivary gland polytene chromosomes. Promotes underreplication by localizing to active DNA replication forks in a partially SuUR-dependent manner, and inhibiting replication fork progression. Might also work as an adapter to recruit Pp1-87B to multiple sites on the chromosome and may function with Pp1-87B to mediate underreplication. Plays an essential role in embryonic development, in the transition from larvae to pupae and, probably, in proliferating tissues later on. In embryos, during mid-blastula transition, binds to and selectively delays the replication of large blocks of repetitive DNA satellite sequences during S phase in response to the activity of Cdk1; maternal Rif1 is specifically required for the normal extension of S phase 14. Unlike mammalian orthologs, does not appear to play a role in DNA damage repair. This chain is Telomere-associated protein RIF1, found in Drosophila melanogaster (Fruit fly).